The primary structure comprises 114 residues: UPF0145 protein PYRAB04900 (114 aa).

Belongs to the UPF0145 family.

The polypeptide is UPF0145 protein PYRAB04900 (Pyrococcus abyssi (strain GE5 / Orsay)).